We begin with the raw amino-acid sequence, 280 residues long: Chaperone protein DnaJ 2 (280 aa).

One can recognise a J domain in the interval 6 to 70; that stretch reads DYYAILGVPR…EKRRIYDTYG (65 aa).

The protein belongs to the DnaJ family. In terms of assembly, forms a heterononamer with DnaJ and DafA in the resting state. Three copies of each protein are present in the complex.

Its subcellular location is the cytoplasm. In terms of biological role, does not influence ATP binding or hydrolysis nor ADP release. Exerts influence on the interaction of DnaK with substrates; in the presence of DafA, DnaJ inhibits substrate binding, and substrate already bound to DnaK is displaced by DnaJ and DafA. The protein is Chaperone protein DnaJ 2 (dnaJ2) of Thermus thermophilus (strain ATCC 27634 / DSM 579 / HB8).